The following is a 189-amino-acid chain: MEQIDKQKIADAVKVILEAVGENPEREGLIDTPMRVARMYEEVFSGLKKDPSIHFDTIFAEQHEELVLVKDIRFSSMCEHHLVPFFGVAHVAYLPQNGRVAGLSKLARVVDDVSKRPQLQERITTTVAEIMMDKLKPLGVMVIMEAEHMCMTIRGVNKPGTKTITSAVRGAFKNDDKLRSEVLALIKHN.

The Zn(2+) site is built by Cys-78, His-81, and Cys-150.

The protein belongs to the GTP cyclohydrolase I family. As to quaternary structure, toroid-shaped homodecamer, composed of two pentamers of five dimers.

It catalyses the reaction GTP + H2O = 7,8-dihydroneopterin 3'-triphosphate + formate + H(+). It functions in the pathway cofactor biosynthesis; 7,8-dihydroneopterin triphosphate biosynthesis; 7,8-dihydroneopterin triphosphate from GTP: step 1/1. The sequence is that of GTP cyclohydrolase 1 from Listeria welshimeri serovar 6b (strain ATCC 35897 / DSM 20650 / CCUG 15529 / CIP 8149 / NCTC 11857 / SLCC 5334 / V8).